A 256-amino-acid chain; its full sequence is Ubiquinone/menaquinone biosynthesis C-methyltransferase UbiE (256 aa).

S-adenosyl-L-methionine contacts are provided by residues threonine 79, aspartate 100, and 128 to 129 (DA).

This sequence belongs to the class I-like SAM-binding methyltransferase superfamily. MenG/UbiE family.

The catalysed reaction is a 2-demethylmenaquinol + S-adenosyl-L-methionine = a menaquinol + S-adenosyl-L-homocysteine + H(+). It carries out the reaction a 2-methoxy-6-(all-trans-polyprenyl)benzene-1,4-diol + S-adenosyl-L-methionine = a 5-methoxy-2-methyl-3-(all-trans-polyprenyl)benzene-1,4-diol + S-adenosyl-L-homocysteine + H(+). It functions in the pathway quinol/quinone metabolism; menaquinone biosynthesis; menaquinol from 1,4-dihydroxy-2-naphthoate: step 2/2. Its pathway is cofactor biosynthesis; ubiquinone biosynthesis. In terms of biological role, methyltransferase required for the conversion of demethylmenaquinol (DMKH2) to menaquinol (MKH2) and the conversion of 2-polyprenyl-6-methoxy-1,4-benzoquinol (DDMQH2) to 2-polyprenyl-3-methyl-6-methoxy-1,4-benzoquinol (DMQH2). This Pseudomonas fluorescens (strain Pf0-1) protein is Ubiquinone/menaquinone biosynthesis C-methyltransferase UbiE.